The primary structure comprises 279 residues: Energy-coupling factor transporter ATP-binding protein EcfA1 (279 aa).

Residues 6–240 (ISVDHLTYQY…GTQLVEMGLD (235 aa)) form the ABC transporter domain. 40-47 (GHNGSGKS) is a binding site for ATP.

It belongs to the ABC transporter superfamily. Energy-coupling factor EcfA family. In terms of assembly, forms a stable energy-coupling factor (ECF) transporter complex composed of 2 membrane-embedded substrate-binding proteins (S component), 2 ATP-binding proteins (A component) and 2 transmembrane proteins (T component).

It is found in the cell membrane. Functionally, ATP-binding (A) component of a common energy-coupling factor (ECF) ABC-transporter complex. Unlike classic ABC transporters this ECF transporter provides the energy necessary to transport a number of different substrates. The protein is Energy-coupling factor transporter ATP-binding protein EcfA1 of Levilactobacillus brevis (strain ATCC 367 / BCRC 12310 / CIP 105137 / JCM 1170 / LMG 11437 / NCIMB 947 / NCTC 947) (Lactobacillus brevis).